Consider the following 78-residue polypeptide: Large ribosomal subunit protein bL28 (78 aa).

It belongs to the bacterial ribosomal protein bL28 family.

The protein is Large ribosomal subunit protein bL28 of Synechococcus sp. (strain CC9311).